We begin with the raw amino-acid sequence, 260 residues long: Proliferating cell nuclear antigen (260 aa).

A DNA-binding region spans residues 61–80 (RCDRNLSMGMNLGSMAKILK).

This sequence belongs to the PCNA family. In terms of assembly, homotrimer. Forms a complex with activator 1 heteropentamer in the presence of ATP. Interacts with E2f. Interacts with the catalytic subunits of two DNA polymerase complexes: PolD1 from the delta complex and PolE1/DNApol-epsilon255 from the epsilon complex. As to expression, expressed at high levels in adult ovary.

The protein resides in the nucleus. The protein localises to the chromosome. It is found in the cytoplasm. Functionally, likely to be an auxiliary protein of DNA polymerase delta complex and is probably involved in the control of DNA replication and repair by increasing the polymerase's processibility. The polypeptide is Proliferating cell nuclear antigen (Drosophila melanogaster (Fruit fly)).